Consider the following 518-residue polypeptide: 3-octaprenyl-4-hydroxybenzoate carboxy-lyase (518 aa).

A Mn(2+)-binding site is contributed by Asn177. Prenylated FMN-binding positions include 180–182 (IYR), 194–196 (RWL), and 199–200 (RG). Glu243 provides a ligand contact to Mn(2+). Asp318 functions as the Proton donor in the catalytic mechanism.

It belongs to the UbiD family. Homohexamer. The cofactor is prenylated FMN. Mn(2+) is required as a cofactor.

The protein resides in the cell membrane. The enzyme catalyses a 4-hydroxy-3-(all-trans-polyprenyl)benzoate + H(+) = a 2-(all-trans-polyprenyl)phenol + CO2. Its pathway is cofactor biosynthesis; ubiquinone biosynthesis. Functionally, catalyzes the decarboxylation of 3-octaprenyl-4-hydroxy benzoate to 2-octaprenylphenol, an intermediate step in ubiquinone biosynthesis. In Burkholderia multivorans (strain ATCC 17616 / 249), this protein is 3-octaprenyl-4-hydroxybenzoate carboxy-lyase.